The sequence spans 495 residues: Glycerol kinase (495 aa).

T16 is a binding site for ADP. ATP-binding residues include T16 and T17. T16 is a binding site for sn-glycerol 3-phosphate. Residue R20 participates in ADP binding. Sn-glycerol 3-phosphate-binding residues include R86, E87, Y138, and D246. Residues R86, E87, Y138, D246, and Q247 each coordinate glycerol. ADP contacts are provided by T268 and G316. The ATP site is built by T268, G316, Q320, and G417. Residues G417 and N421 each contribute to the ADP site.

This sequence belongs to the FGGY kinase family.

It catalyses the reaction glycerol + ATP = sn-glycerol 3-phosphate + ADP + H(+). It participates in polyol metabolism; glycerol degradation via glycerol kinase pathway; sn-glycerol 3-phosphate from glycerol: step 1/1. With respect to regulation, inhibited by fructose 1,6-bisphosphate (FBP). In terms of biological role, key enzyme in the regulation of glycerol uptake and metabolism. Catalyzes the phosphorylation of glycerol to yield sn-glycerol 3-phosphate. The protein is Glycerol kinase of Synechocystis sp. (strain ATCC 27184 / PCC 6803 / Kazusa).